The chain runs to 91 residues: MEARDILKRPVITEKSSEAMAEDKYTFDVDTRVNKTQVKMAVEEIFNVKVASVNIMNYKPKKKRMGRYQGYTNKRRKAIVTLKEGSIDLFN.

This sequence belongs to the universal ribosomal protein uL23 family. In terms of assembly, part of the 50S ribosomal subunit. Contacts protein L29, and trigger factor when it is bound to the ribosome.

One of the early assembly proteins it binds 23S rRNA. One of the proteins that surrounds the polypeptide exit tunnel on the outside of the ribosome. Forms the main docking site for trigger factor binding to the ribosome. This is Large ribosomal subunit protein uL23 from Staphylococcus aureus (strain USA300).